The primary structure comprises 605 residues: Bifunctional purine biosynthesis protein ADE16 (605 aa).

An MGS-like domain is found at 1-147 (MSSEAPIALL…KNHGRVSIIS (147 aa)). IMP contacts are provided by residues 35–38 (SGGT), 65–68 (RVKT), 102–103 (CN), and 126–127 (DI). Residue Lys138 is the Proton donor/acceptor; for FAICAR cyclization activity of the active site. Residues 219-220 (RY), His279, Gly327, Asp350, Asn442, and Arg462 each bind 5-amino-1-(5-phospho-beta-D-ribosyl)imidazole-4-carboxamide. Catalysis depends on His279, which acts as the Proton acceptor; for AICAR formyltransferase activity. Residue Ile463 participates in (6R)-10-formyltetrahydrofolate binding. Phe554 is a binding site for 5-amino-1-(5-phospho-beta-D-ribosyl)imidazole-4-carboxamide. Asp559 contributes to the (6R)-10-formyltetrahydrofolate binding site. 5-amino-1-(5-phospho-beta-D-ribosyl)imidazole-4-carboxamide is bound at residue Arg601.

This sequence belongs to the PurH family. Homodimer.

The protein resides in the cytoplasm. It is found in the cytosol. The catalysed reaction is (6R)-10-formyltetrahydrofolate + 5-amino-1-(5-phospho-beta-D-ribosyl)imidazole-4-carboxamide = 5-formamido-1-(5-phospho-D-ribosyl)imidazole-4-carboxamide + (6S)-5,6,7,8-tetrahydrofolate. It catalyses the reaction IMP + H2O = 5-formamido-1-(5-phospho-D-ribosyl)imidazole-4-carboxamide. The protein operates within purine metabolism; IMP biosynthesis via de novo pathway; 5-formamido-1-(5-phospho-D-ribosyl)imidazole-4-carboxamide from 5-amino-1-(5-phospho-D-ribosyl)imidazole-4-carboxamide (10-formyl THF route): step 1/1. Its pathway is purine metabolism; IMP biosynthesis via de novo pathway; IMP from 5-formamido-1-(5-phospho-D-ribosyl)imidazole-4-carboxamide: step 1/1. Its function is as follows. Bifunctional enzyme that catalyzes the last two steps of purine biosynthesis. Acts as a transformylase that incorporates a formyl group to the AMP analog AICAR (5-amino-1-(5-phospho-beta-D-ribosyl)imidazole-4-carboxamide) to produce the intermediate formyl-AICAR (FAICAR). Also catalyzes the cyclization of FAICAR to IMP. The sequence is that of Bifunctional purine biosynthesis protein ADE16 from Cryptococcus neoformans var. grubii serotype A (strain H99 / ATCC 208821 / CBS 10515 / FGSC 9487) (Filobasidiella neoformans var. grubii).